A 246-amino-acid chain; its full sequence is Protein-lysine N-methyltransferase EFM6 (246 aa).

S-adenosyl-L-methionine-binding positions include W51, 87–89 (GSG), D115, W143, and A169.

Belongs to the class I-like SAM-binding methyltransferase superfamily. METTL21 family. EFM6 subfamily.

The protein localises to the cytoplasm. Functionally, S-adenosyl-L-methionine-dependent protein-lysine N-methyltransferase that methylates elongation factor 1-alpha (TEF1 and TEF2) at 'Lys-390'. The polypeptide is Protein-lysine N-methyltransferase EFM6 (Saccharomyces cerevisiae (strain ATCC 204508 / S288c) (Baker's yeast)).